The sequence spans 270 residues: Hydroxyethylthiazole kinase (270 aa).

Methionine 47 contacts substrate. ATP contacts are provided by arginine 123 and serine 170. Glycine 197 serves as a coordination point for substrate.

This sequence belongs to the Thz kinase family. Mg(2+) serves as cofactor.

It carries out the reaction 5-(2-hydroxyethyl)-4-methylthiazole + ATP = 4-methyl-5-(2-phosphooxyethyl)-thiazole + ADP + H(+). Its pathway is cofactor biosynthesis; thiamine diphosphate biosynthesis; 4-methyl-5-(2-phosphoethyl)-thiazole from 5-(2-hydroxyethyl)-4-methylthiazole: step 1/1. In terms of biological role, catalyzes the phosphorylation of the hydroxyl group of 4-methyl-5-beta-hydroxyethylthiazole (THZ). This is Hydroxyethylthiazole kinase from Syntrophus aciditrophicus (strain SB).